The sequence spans 138 residues: CLAVATA3/ESR (CLE)-related protein 2 (138 aa).

An N-terminal signal peptide occupies residues 1 to 22; sequence MPNIFKILLIVLLAVVSFRLSA. A required for secretion from the host cytoplasm to the host apoplasm region spans residues 23–90; sequence STGDKKTAND…VPSHVTNRSM (68 aa). 3 N-linked (GlcNAc...) asparagine glycosylation sites follow: Asn-37, Asn-87, and Asn-123. Disordered regions lie at residues 66 to 97 and 116 to 138; these read AIGR…PPPV and LAEK…PHHH. The CLE signature appears at 127–138; sequence RLSPSGPDPHHH.

The protein belongs to the CLV3/ESR signal peptide family. In terms of tissue distribution, highly expressed exclusively within the dorsal esophageal gland cell during syncytium formation in host plants (at protein level).

The protein resides in the secreted. It localises to the host cytoplasm. It is found in the host extracellular space. The protein localises to the extracellular space. Its subcellular location is the apoplast. Mimics host plant CLE extracellular signal peptides that regulate cell fate. May play a role in the differentiation or division of feeding cells (syncytia) induced in plant roots during infection. This chain is CLAVATA3/ESR (CLE)-related protein 2 (CLE2), found in Heterodera glycines (Soybean cyst nematode worm).